We begin with the raw amino-acid sequence, 108 residues long: UPF0102 protein Sbal_4100 (108 aa).

It belongs to the UPF0102 family.

This chain is UPF0102 protein Sbal_4100, found in Shewanella baltica (strain OS155 / ATCC BAA-1091).